Consider the following 131-residue polypeptide: Holo-[acyl-carrier-protein] synthase (131 aa).

Asp8 and Glu62 together coordinate Mg(2+).

This sequence belongs to the P-Pant transferase superfamily. AcpS family. The cofactor is Mg(2+).

Its subcellular location is the cytoplasm. It carries out the reaction apo-[ACP] + CoA = holo-[ACP] + adenosine 3',5'-bisphosphate + H(+). Its function is as follows. Transfers the 4'-phosphopantetheine moiety from coenzyme A to a Ser of acyl-carrier-protein. The chain is Holo-[acyl-carrier-protein] synthase from Delftia acidovorans (strain DSM 14801 / SPH-1).